We begin with the raw amino-acid sequence, 219 residues long: Protein-L-isoaspartate O-methyltransferase (219 aa).

The active site involves Ser-67.

The protein belongs to the methyltransferase superfamily. L-isoaspartyl/D-aspartyl protein methyltransferase family.

It localises to the cytoplasm. The enzyme catalyses [protein]-L-isoaspartate + S-adenosyl-L-methionine = [protein]-L-isoaspartate alpha-methyl ester + S-adenosyl-L-homocysteine. Its function is as follows. Catalyzes the methyl esterification of L-isoaspartyl residues in peptides and proteins that result from spontaneous decomposition of normal L-aspartyl and L-asparaginyl residues. It plays a role in the repair and/or degradation of damaged proteins. The sequence is that of Protein-L-isoaspartate O-methyltransferase from Cereibacter sphaeroides (strain ATCC 17029 / ATH 2.4.9) (Rhodobacter sphaeroides).